A 284-amino-acid chain; its full sequence is Ribosome-associated protein oga1 (284 aa).

The tract at residues 1-284 (MSVASKNLFD…LSETDFPALA (284 aa)) is disordered. A compositionally biased stretch (basic and acidic residues) spans 22–36 (TEKKTAASRDKKRSD). Serine 37 and serine 51 each carry phosphoserine. Basic and acidic residues-rich tracts occupy residues 52-73 (RKRDPNQPTPRERTVNKKADQP) and 119-141 (GREFDRHSQTGRVDTKKATERGW). Threonine 160 is subject to Phosphothreonine. At serine 162 the chain carries Phosphoserine. Phosphothreonine is present on threonine 166. Composition is skewed to basic and acidic residues over residues 172-186 (ENVKTLDEYLSERKS) and 194-209 (TVEKLENATKVEKSAP). Positions 214-224 (ASLKKSASQKK) are enriched in low complexity. Residues 226–237 (AAKESKPKKVLL) are compositionally biased toward basic and acidic residues. Residues 245 to 254 (ARPARGGRPN) are compositionally biased toward low complexity. The segment covering 263–277 (ETASKTQQAPPTLSE) has biased composition (polar residues).

This sequence belongs to the STM1 family. As to quaternary structure, associates with mature 80S ribosomes. Binds to the head domain of the 40S ribosomal subunit and prevents mRNA binding by inserting its alpha-helix domain towards the mRNA entry tunnel at the decoding site, where it blocks the binding of tRNA and mRNA at the A- and P-sites. Interacts with eEF2; interaction sequesters eEF2 at the A-site of the ribosome, thereby blocking the interaction sites of the mRNA-tRNA complex, promoting ribosome stabilization and hibernation. Interacts with sad1. Phosphorylation by TORC1 upon nutrient replenishment inhibits STM1 and causes its release from dormant ribosomes.

Its subcellular location is the cytoplasm. Ribosome preservation factor that protect a small pool of nontranslating, vacant ribosomes in cells under nutrient starvation conditions. Under nutrient-limiting conditions, cells reduce ribosome biogenesis and degrade ribosomes via autophagy (ribophagy) or proteasomal degradation. To avoid excessive degradation during starvation, STM1 binds to and protects 80S ribosomes from proteasomal degradation. Under nutrient-sufficient conditions, TORC1 phosphorylates and inhibits STM1 to prevent formation of dormant 80S ribosomes. Acts as an inhibitor of mRNA translation by promoting ribosome hibernation: clamps the two ribosomal subunits, thereby preventing their dissociation, and inhibits translation by excluding mRNA-binding. Acts via its association with eEF2, promoting ribosome stabilization and storage in an inactive state. May also repress translation by preventing association of eEF3 with ribosomes. Binds specifically G4 quadruplex (these are four-stranded right-handed helices, stabilized by guanine base quartets) and purine motif triplex (characterized by a third, antiparallel purine-rich DNA strand located within the major groove of a homopurine stretch of duplex DNA) nucleic acid structures. These structures may be present at telomeres or in rRNAs. Extends chronological lifespan when overexpressed. The polypeptide is Ribosome-associated protein oga1 (Schizosaccharomyces pombe (strain 972 / ATCC 24843) (Fission yeast)).